Reading from the N-terminus, the 156-residue chain is Cyclin-dependent kinase inhibitor 2A (156 aa).

Methionine 1 is modified (N-acetylmethionine). Phosphoserine occurs at positions 7 and 8. ANK repeat units follow at residues 11–40 (PSAD…LPNA), 44–72 (YGRR…EPNC), 77–106 (TLTR…RLDV), and 110–139 (WGRL…GTRG). Phosphoserine occurs at positions 140 and 152.

It belongs to the CDKN2 cyclin-dependent kinase inhibitor family. Heterodimer with CDK4 or CDK6. Predominant p16 complexes contained CDK6. Interacts with CDK4 (both 'T-172'-phosphorylated and non-phosphorylated forms); the interaction inhibits cyclin D-CDK4 kinase activity. Interacts with ISCO2. In terms of processing, phosphorylation seems to increase interaction with CDK4. Widely expressed but not detected in brain or skeletal muscle. Isoform 3 is pancreas-specific.

The protein localises to the cytoplasm. It localises to the nucleus. Its function is as follows. Acts as a negative regulator of the proliferation of normal cells by interacting strongly with CDK4 and CDK6. This inhibits their ability to interact with cyclins D and to phosphorylate the retinoblastoma protein. The protein is Cyclin-dependent kinase inhibitor 2A of Homo sapiens (Human).